A 138-amino-acid chain; its full sequence is Ribosome-binding factor A (138 aa).

Belongs to the RbfA family. Monomer. Binds 30S ribosomal subunits, but not 50S ribosomal subunits or 70S ribosomes.

The protein resides in the cytoplasm. Its function is as follows. One of several proteins that assist in the late maturation steps of the functional core of the 30S ribosomal subunit. Associates with free 30S ribosomal subunits (but not with 30S subunits that are part of 70S ribosomes or polysomes). Required for efficient processing of 16S rRNA. May interact with the 5'-terminal helix region of 16S rRNA. In Paracoccus denitrificans (strain Pd 1222), this protein is Ribosome-binding factor A.